The sequence spans 496 residues: Lysine--tRNA ligase (496 aa).

Residues Glu405 and Glu412 each contribute to the Mg(2+) site.

The protein belongs to the class-II aminoacyl-tRNA synthetase family. As to quaternary structure, homodimer. The cofactor is Mg(2+).

It localises to the cytoplasm. It carries out the reaction tRNA(Lys) + L-lysine + ATP = L-lysyl-tRNA(Lys) + AMP + diphosphate. The polypeptide is Lysine--tRNA ligase (Vesicomyosocius okutanii subsp. Calyptogena okutanii (strain HA)).